The sequence spans 156 residues: ATP synthase subunit b (156 aa).

Residues 3–23 (ITLTIFAQALAFAGLIWIVAT) form a helical membrane-spanning segment.

This sequence belongs to the ATPase B chain family. F-type ATPases have 2 components, F(1) - the catalytic core - and F(0) - the membrane proton channel. F(1) has five subunits: alpha(3), beta(3), gamma(1), delta(1), epsilon(1). F(0) has three main subunits: a(1), b(2) and c(10-14). The alpha and beta chains form an alternating ring which encloses part of the gamma chain. F(1) is attached to F(0) by a central stalk formed by the gamma and epsilon chains, while a peripheral stalk is formed by the delta and b chains.

Its subcellular location is the cell inner membrane. Its function is as follows. F(1)F(0) ATP synthase produces ATP from ADP in the presence of a proton or sodium gradient. F-type ATPases consist of two structural domains, F(1) containing the extramembraneous catalytic core and F(0) containing the membrane proton channel, linked together by a central stalk and a peripheral stalk. During catalysis, ATP synthesis in the catalytic domain of F(1) is coupled via a rotary mechanism of the central stalk subunits to proton translocation. Functionally, component of the F(0) channel, it forms part of the peripheral stalk, linking F(1) to F(0). The polypeptide is ATP synthase subunit b (Xanthomonas campestris pv. campestris (strain 8004)).